Reading from the N-terminus, the 252-residue chain is Ubiquinone biosynthesis O-methyltransferase (252 aa).

S-adenosyl-L-methionine is bound by residues Arg36, Gly60, Asp81, and Leu123.

It belongs to the methyltransferase superfamily. UbiG/COQ3 family.

The enzyme catalyses a 3-demethylubiquinol + S-adenosyl-L-methionine = a ubiquinol + S-adenosyl-L-homocysteine + H(+). The catalysed reaction is a 3-(all-trans-polyprenyl)benzene-1,2-diol + S-adenosyl-L-methionine = a 2-methoxy-6-(all-trans-polyprenyl)phenol + S-adenosyl-L-homocysteine + H(+). It participates in cofactor biosynthesis; ubiquinone biosynthesis. Its function is as follows. O-methyltransferase that catalyzes the 2 O-methylation steps in the ubiquinone biosynthetic pathway. The protein is Ubiquinone biosynthesis O-methyltransferase of Rickettsia prowazekii (strain Madrid E).